The primary structure comprises 525 residues: GMP synthase [glutamine-hydrolyzing] (525 aa).

The Glutamine amidotransferase type-1 domain occupies 8–207; the sequence is KILILDFGSQ…ALDICGCAAN (200 aa). Cysteine 85 serves as the catalytic Nucleophile. Active-site residues include histidine 181 and glutamate 183. The 193-residue stretch at 208 to 400 folds into the GMPS ATP-PPase domain; that stretch reads WKPSSIIEDA…LGLPYNMLYR (193 aa). Position 235 to 241 (235 to 241) interacts with ATP; sequence SGGVDSS.

As to quaternary structure, homodimer.

The catalysed reaction is XMP + L-glutamine + ATP + H2O = GMP + L-glutamate + AMP + diphosphate + 2 H(+). It functions in the pathway purine metabolism; GMP biosynthesis; GMP from XMP (L-Gln route): step 1/1. In terms of biological role, catalyzes the synthesis of GMP from XMP. The sequence is that of GMP synthase [glutamine-hydrolyzing] from Shewanella baltica (strain OS223).